A 66-amino-acid chain; its full sequence is Large ribosomal subunit protein uL29 (66 aa).

This sequence belongs to the universal ribosomal protein uL29 family.

This chain is Large ribosomal subunit protein uL29, found in Bartonella henselae (strain ATCC 49882 / DSM 28221 / CCUG 30454 / Houston 1) (Rochalimaea henselae).